Reading from the N-terminus, the 394-residue chain is NAD(P)H-quinone oxidoreductase subunit H (394 aa).

Belongs to the complex I 49 kDa subunit family. As to quaternary structure, NDH-1 can be composed of about 15 different subunits; different subcomplexes with different compositions have been identified which probably have different functions.

The protein localises to the cellular thylakoid membrane. It catalyses the reaction a plastoquinone + NADH + (n+1) H(+)(in) = a plastoquinol + NAD(+) + n H(+)(out). The enzyme catalyses a plastoquinone + NADPH + (n+1) H(+)(in) = a plastoquinol + NADP(+) + n H(+)(out). Its function is as follows. NDH-1 shuttles electrons from an unknown electron donor, via FMN and iron-sulfur (Fe-S) centers, to quinones in the respiratory and/or the photosynthetic chain. The immediate electron acceptor for the enzyme in this species is believed to be plastoquinone. Couples the redox reaction to proton translocation, and thus conserves the redox energy in a proton gradient. Cyanobacterial NDH-1 also plays a role in inorganic carbon-concentration. The polypeptide is NAD(P)H-quinone oxidoreductase subunit H (Synechococcus sp. (strain WH7803)).